The chain runs to 1016 residues: DNA polymerase I (1016 aa).

A 5'-3' exonuclease domain is found at 1-308; the sequence is MPNSIWTSSD…MEFTTLTRRV (308 aa). The disordered stretch occupies residues 334-361; sequence GPDLDAAEPEPVAGGIPEVSGESVPMPP. In terms of domain architecture, 3'-5' exonuclease spans 394 to 630; that stretch reads SAYVTIRDLV…MEARGITVDR (237 aa). A polymerase region spans residues 768–1016; it reads GRKIRTAFIS…RAATNWDEAH (249 aa).

It belongs to the DNA polymerase type-A family. In terms of assembly, single-chain monomer with multiple functions.

It carries out the reaction DNA(n) + a 2'-deoxyribonucleoside 5'-triphosphate = DNA(n+1) + diphosphate. Its function is as follows. In addition to polymerase activity, this DNA polymerase exhibits 3'-5' and 5'-3' exonuclease activity. The polypeptide is DNA polymerase I (polA) (Rhizobium leguminosarum).